We begin with the raw amino-acid sequence, 431 residues long: Saglin (431 aa).

The first 39 residues, 1–39, serve as a signal peptide directing secretion; the sequence is MSVRDYSGVQVISSRKHRSMSRLPTVLLLLASAAVLAAG. Asparagine 95 is a glycosylation site (N-linked (GlcNAc...) asparagine). Residues 120-169 are a coiled coil; that stretch reads LDDAQRQMEQEHRQYAATLEEQLHAAQQETQQEQEMKKALQKQLDALTDS.

As to quaternary structure, homodimer. In terms of tissue distribution, female salivary gland (at protein level). Not detected in female carcass without salivary glands, midgut and hemolymph (at protein level). Probably not expressed in male tissues.

It is found in the secreted. Functionally, (Microbial infection) Facilitates efficient midgut colonization by Plasmodium berghei parasites. Promotes successful transmission of Plasmodium berghei at low infection densities. In terms of biological role, (Microbial infection) Facilitates efficient midgut colonization by Plasmodium falciparum. This is Saglin from Anopheles coluzzii (African malaria mosquito).